The primary structure comprises 296 residues: Glucokinase (296 aa).

The protein belongs to the ROK (NagC/XylR) family. In terms of assembly, homodimer. Requires a divalent metal cation as cofactor.

It carries out the reaction D-glucose + ATP = D-glucose 6-phosphate + ADP + H(+). Its function is as follows. Catalyzes the phosphorylation of D-glucose to D-glucose 6-phosphate using ATP as the phosphate donor. Has a broad hexose specificity, and in addition to glucose, which shows the highest catalytic efficiency, it can also phosphorylate fructose, mannose, galactose and sorbitol. Can also use CTP, GTP or UTP as phosphoryl donor. The chain is Glucokinase from Pyrobaculum calidifontis (strain DSM 21063 / JCM 11548 / VA1).